The primary structure comprises 122 residues: Histone H2B.2 (122 aa).

Low complexity predominate over residues 1–10 (MAPKKAPAAT). The tract at residues 1 to 28 (MAPKKAPAATTEKKVKKAPTTEKKNKKK) is disordered. A N,N,N-trimethylalanine modification is found at alanine 2. Lysine 5 and lysine 42 each carry N6-acetyllysine. Lysine 116 is covalently cross-linked (Glycyl lysine isopeptide (Lys-Gly) (interchain with G-Cter in ubiquitin)).

It belongs to the histone H2B family. The nucleosome is a histone octamer containing two molecules each of H2A, H2B, H3 and H4 assembled in one H3-H4 heterotetramer and two H2A-H2B heterodimers. The octamer wraps approximately 147 bp of DNA. Post-translationally, acetylation occurs almost exclusively in the MAC. In terms of processing, monoubiquitination to form H2BK115ub1 gives a specific tag for epigenetic transcriptional activation and is also prerequisite for H3K4me and H3K79me formation.

The protein localises to the nucleus. It localises to the chromosome. In terms of biological role, core component of nucleosome. Nucleosomes wrap and compact DNA into chromatin, limiting DNA accessibility to the cellular machineries which require DNA as a template. Histones thereby play a central role in transcription regulation, DNA repair, DNA replication and chromosomal stability. DNA accessibility is regulated via a complex set of post-translational modifications of histones, also called histone code, and nucleosome remodeling. The protein is Histone H2B.2 (HTB2) of Tetrahymena thermophila (strain SB210).